A 417-amino-acid chain; its full sequence is uncharacterized protein (417 aa).

This is an uncharacterized protein from Sulfolobus islandicus rod-shaped virus 1 (SIRV-1).